Consider the following 213-residue polypeptide: T-cell surface glycoprotein CD8 beta chain (213 aa).

Residues 1 to 21 (MQPWLWLVFSMKLAALWSSSA) form the signal peptide. Residues 22–133 (LIQTPSSLLV…KMVFGTGTKL (112 aa)) enclose the Ig-like V-type domain. Residues 22–175 (LIQTPSSLLV…QKGLTCSLTT (154 aa)) lie on the Extracellular side of the membrane. The N-linked (GlcNAc...) asparagine glycan is linked to N34. The cysteines at positions 41 and 117 are disulfide-linked. A helical transmembrane segment spans residues 176 to 196 (LSLLVVCILLLLAFLGVAVYF). Topologically, residues 197 to 213 (YCVRRRARIHFMKQFHK) are cytoplasmic.

In terms of assembly, forms disulfide-linked heterodimers with CD8A at the cell surface. Interacts with CD3D; this interaction couples TCR-CD3 with CD8. Interacts with LCK. Post-translationally, palmitoylated at the cytoplasmic tail and thereby targets the heterodimer CD8A/CD8B to lipid rafts unlike CD8A homodimers.

The protein resides in the membrane. In terms of biological role, integral membrane glycoprotein that plays an essential role in the immune response and serves multiple functions in responses against both external and internal offenses. In T-cells, functions primarily as a coreceptor for MHC class I molecule:peptide complex. The antigens presented by class I peptides are derived from cytosolic proteins while class II derived from extracellular proteins. Interacts simultaneously with the T-cell receptor (TCR) and the MHC class I proteins presented by antigen presenting cells (APCs). In turn, recruits the Src kinase LCK to the vicinity of the TCR-CD3 complex. A palmitoylation site in the cytoplasmic tail of CD8B chain contributes to partitioning of CD8 into the plasma membrane lipid rafts where signaling proteins are enriched. Once LCK recruited, it initiates different intracellular signaling pathways by phosphorylating various substrates ultimately leading to lymphokine production, motility, adhesion and activation of cytotoxic T-lymphocytes (CTLs). Additionally, plays a critical role in thymic selection of CD8+ T-cells. The protein is T-cell surface glycoprotein CD8 beta chain (Cd8b) of Mus musculus (Mouse).